The chain runs to 2216 residues: Protein Ycf2 (2216 aa).

Gly1567–Ser1574 contacts ATP.

The protein belongs to the Ycf2 family.

The protein resides in the plastid stroma. Its function is as follows. Probable ATPase of unknown function. Its presence in a non-photosynthetic plant (Epifagus virginiana) and experiments in tobacco indicate that it has an essential function which is probably not related to photosynthesis. The protein is Protein Ycf2 of Epifagus virginiana (Beechdrops).